The primary structure comprises 559 residues: PHD finger protein 1 (559 aa).

One can recognise a Tudor domain in the interval 29 to 86 (PRLWEGQDVLARWTDGLLYLGTIKKVDSAREVCLVQFEDDSQFLVLWKDISPAALPGE). 2 PHD-type zinc fingers span residues 87–142 (ELLC…CVFA) and 186–240 (QSYC…CRGG). 2 disordered regions span residues 338–434 (PVEL…TDAR) and 448–526 (HPSA…GGVS). Residues 369–386 (WRSEPEPLRRRQKGKVEE) show a composition bias toward basic and acidic residues. 2 stretches are compositionally biased toward polar residues: residues 417–426 (NQSYEGSSGY) and 449–459 (PSASTAGTSGD). The span at 481–515 (SSPHSVTASSSSVPALTPGFSRHSPPSPLCRSLSP) shows a compositional bias: low complexity.

The protein belongs to the Polycomblike family. In terms of assembly, associated component of the PRC2 complex. Interacts with p53/TP53. Interacts with CHMP1. Testis-specific.

The protein resides in the nucleus. Its subcellular location is the cytoplasm. It is found in the cytoskeleton. The protein localises to the microtubule organizing center. It localises to the centrosome. Functionally, polycomb group (PcG) that specifically binds histone H3 trimethylated at 'Lys-36' (H3K36me3) and recruits the PRC2 complex. Involved in DNA damage response and is recruited at double-strand breaks (DSBs). Acts by binding to H3K36me3, a mark for transcriptional activation, and recruiting the PRC2 complex: it is however unclear whether recruitment of the PRC2 complex to H3K36me3 leads to enhance or inhibit H3K27me3 methylation mediated by the PRC2 complex. According to some reports, PRC2 recruitment by PHF1 promotes H3K27me3 and subsequent gene silencing by inducing spreading of PRC2 and H3K27me3 into H3K36me3 loci. According to other reports, PHF1 recruits the PRC2 complex at double-strand breaks (DSBs) and inhibits the activity of PRC2. Regulates p53/TP53 stability and prolonges its turnover: may act by specifically binding to a methylated from of p53/TP53. In Mus musculus (Mouse), this protein is PHD finger protein 1 (Phf1).